The sequence spans 474 residues: 1-aminocyclopropane-1-carboxylate synthase 4 (474 aa).

2 residues coordinate substrate: E47 and Y85. K273 is modified (N6-(pyridoxal phosphate)lysine).

The protein belongs to the class-I pyridoxal-phosphate-dependent aminotransferase family. In terms of assembly, homodimer and heterodimer. In vivo, the relevance of heterodimerization with other ACS enzymes is however unsure. Interacts with XBAT32. Interacts (via its C-terminal region) with ETO1 and EOL1. Pyridoxal 5'-phosphate serves as cofactor. Post-translationally, ubiquitinated by XBAT32. Ubiquitination probably leads to its subsequent degradation, thus controlling ethylene production. As to expression, expressed in roots, leaves and flowers.

It carries out the reaction S-adenosyl-L-methionine = 1-aminocyclopropane-1-carboxylate + S-methyl-5'-thioadenosine + H(+). The protein operates within alkene biosynthesis; ethylene biosynthesis via S-adenosyl-L-methionine; ethylene from S-adenosyl-L-methionine: step 1/2. Functionally, 1-aminocyclopropane-1-carboxylate synthase (ACS) enzymes catalyze the conversion of S-adenosyl-L-methionine (SAM) into 1-aminocyclopropane-1-carboxylate (ACC), a direct precursor of ethylene. The protein is 1-aminocyclopropane-1-carboxylate synthase 4 (ACS4) of Arabidopsis thaliana (Mouse-ear cress).